The primary structure comprises 361 residues: Cobalt-precorrin-5B C(1)-methyltransferase (361 aa).

The protein belongs to the CbiD family.

It catalyses the reaction Co-precorrin-5B + S-adenosyl-L-methionine = Co-precorrin-6A + S-adenosyl-L-homocysteine. It functions in the pathway cofactor biosynthesis; adenosylcobalamin biosynthesis; cob(II)yrinate a,c-diamide from sirohydrochlorin (anaerobic route): step 6/10. Its function is as follows. Catalyzes the methylation of C-1 in cobalt-precorrin-5B to form cobalt-precorrin-6A. This is Cobalt-precorrin-5B C(1)-methyltransferase from Methylorubrum extorquens (strain CM4 / NCIMB 13688) (Methylobacterium extorquens).